The chain runs to 245 residues: Putative [LysW]-aminoadipate/[LysW]-glutamate kinase (245 aa).

Residues R60 and N162 each coordinate substrate.

Belongs to the acetylglutamate kinase family. LysZ subfamily.

It localises to the cytoplasm. It carries out the reaction [amino-group carrier protein]-C-terminal-N-(1,4-dicarboxybutan-1-yl)-L-glutamine + ATP = [amino-group carrier protein]-C-terminal-N-(1-carboxy-5-phosphooxy-5-oxopentan-1-yl)-L-glutamine + ADP. The catalysed reaction is [amino-group carrier protein]-C-terminal-gamma-(L-glutamyl)-L-glutamate + ATP = [amino-group carrier protein]-C-terminal-gamma-(5-phospho-L-glutamyl)-L-glutamate + ADP. It functions in the pathway amino-acid biosynthesis; L-lysine biosynthesis via AAA pathway; L-lysine from L-alpha-aminoadipate (Thermus route): step 2/5. Its pathway is amino-acid biosynthesis; L-arginine biosynthesis. Involved in both the arginine and lysine biosynthetic pathways. Phosphorylates the LysW-bound precursors glutamate (for arginine biosynthesis), respectively alpha-aminoadipate (for lysine biosynthesis). This chain is Putative [LysW]-aminoadipate/[LysW]-glutamate kinase, found in Pyrococcus abyssi (strain GE5 / Orsay).